The following is a 270-amino-acid chain: tRNA pseudouridine synthase A (270 aa).

The active-site Nucleophile is the Asp-52. Tyr-110 lines the substrate pocket. Residues 251–270 (TGAADEPAAPHGVTETRMQL) form a disordered region.

This sequence belongs to the tRNA pseudouridine synthase TruA family. Homodimer.

It catalyses the reaction uridine(38/39/40) in tRNA = pseudouridine(38/39/40) in tRNA. In terms of biological role, formation of pseudouridine at positions 38, 39 and 40 in the anticodon stem and loop of transfer RNAs. The protein is tRNA pseudouridine synthase A of Roseiflexus sp. (strain RS-1).